Here is a 195-residue protein sequence, read N- to C-terminus: Imidazoleglycerol-phosphate dehydratase (195 aa).

The protein belongs to the imidazoleglycerol-phosphate dehydratase family.

It localises to the cytoplasm. It carries out the reaction D-erythro-1-(imidazol-4-yl)glycerol 3-phosphate = 3-(imidazol-4-yl)-2-oxopropyl phosphate + H2O. The protein operates within amino-acid biosynthesis; L-histidine biosynthesis; L-histidine from 5-phospho-alpha-D-ribose 1-diphosphate: step 6/9. The sequence is that of Imidazoleglycerol-phosphate dehydratase from Burkholderia thailandensis (strain ATCC 700388 / DSM 13276 / CCUG 48851 / CIP 106301 / E264).